The sequence spans 203 residues: Holliday junction branch migration complex subunit RuvA (203 aa).

The segment at 1-64 (MIGRLRGIIL…EDAQLLYGFN (64 aa)) is domain I. A domain II region spans residues 65 to 142 (NKQERTLFKE…KGLHGDLFTP (78 aa)). Residues 143–154 (AVDLVLTSPASP) form a flexible linker region. Residues 155-203 (GSEDAEQEAVAALVALGYKPQEASRMVSKIARPDASSETLIRDALRAAL) are domain III.

The protein belongs to the RuvA family. In terms of assembly, homotetramer. Forms an RuvA(8)-RuvB(12)-Holliday junction (HJ) complex. HJ DNA is sandwiched between 2 RuvA tetramers; dsDNA enters through RuvA and exits via RuvB. An RuvB hexamer assembles on each DNA strand where it exits the tetramer. Each RuvB hexamer is contacted by two RuvA subunits (via domain III) on 2 adjacent RuvB subunits; this complex drives branch migration. In the full resolvosome a probable DNA-RuvA(4)-RuvB(12)-RuvC(2) complex forms which resolves the HJ.

It localises to the cytoplasm. In terms of biological role, the RuvA-RuvB-RuvC complex processes Holliday junction (HJ) DNA during genetic recombination and DNA repair, while the RuvA-RuvB complex plays an important role in the rescue of blocked DNA replication forks via replication fork reversal (RFR). RuvA specifically binds to HJ cruciform DNA, conferring on it an open structure. The RuvB hexamer acts as an ATP-dependent pump, pulling dsDNA into and through the RuvAB complex. HJ branch migration allows RuvC to scan DNA until it finds its consensus sequence, where it cleaves and resolves the cruciform DNA. In Salmonella schwarzengrund (strain CVM19633), this protein is Holliday junction branch migration complex subunit RuvA.